The following is a 166-amino-acid chain: Large ribosomal subunit protein uL10 (166 aa).

The protein belongs to the universal ribosomal protein uL10 family. Part of the ribosomal stalk of the 50S ribosomal subunit. The N-terminus interacts with L11 and the large rRNA to form the base of the stalk. The C-terminus forms an elongated spine to which L12 dimers bind in a sequential fashion forming a multimeric L10(L12)X complex.

Functionally, forms part of the ribosomal stalk, playing a central role in the interaction of the ribosome with GTP-bound translation factors. The chain is Large ribosomal subunit protein uL10 from Staphylococcus epidermidis (strain ATCC 35984 / DSM 28319 / BCRC 17069 / CCUG 31568 / BM 3577 / RP62A).